We begin with the raw amino-acid sequence, 339 residues long: Methionyl-tRNA formyltransferase (339 aa).

Residue 110 to 113 (SLLP) coordinates (6S)-5,6,7,8-tetrahydrofolate.

Belongs to the Fmt family.

It catalyses the reaction L-methionyl-tRNA(fMet) + (6R)-10-formyltetrahydrofolate = N-formyl-L-methionyl-tRNA(fMet) + (6S)-5,6,7,8-tetrahydrofolate + H(+). In terms of biological role, attaches a formyl group to the free amino group of methionyl-tRNA(fMet). The formyl group appears to play a dual role in the initiator identity of N-formylmethionyl-tRNA by promoting its recognition by IF2 and preventing the misappropriation of this tRNA by the elongation apparatus. This is Methionyl-tRNA formyltransferase from Prochlorococcus marinus (strain MIT 9211).